The following is a 1151-amino-acid chain: Error-prone DNA polymerase (1151 aa).

The tract at residues 1108 to 1151 (HPVPSGDALIEPLNDDRRDHADAPAQKIRHPRNVRILPPSRDFH) is disordered.

Belongs to the DNA polymerase type-C family. DnaE2 subfamily.

The protein localises to the cytoplasm. It catalyses the reaction DNA(n) + a 2'-deoxyribonucleoside 5'-triphosphate = DNA(n+1) + diphosphate. DNA polymerase involved in damage-induced mutagenesis and translesion synthesis (TLS). It is not the major replicative DNA polymerase. This is Error-prone DNA polymerase from Bradyrhizobium diazoefficiens (strain JCM 10833 / BCRC 13528 / IAM 13628 / NBRC 14792 / USDA 110).